The primary structure comprises 64 residues: Alpha-toxin Ts5 (64 aa).

The LCN-type CS-alpha/beta domain maps to 2–64; the sequence is KDGYPVEGDN…KEPTKTSGRC (63 aa). Cystine bridges form between Cys12/Cys64, Cys16/Cys38, Cys24/Cys44, and Cys28/Cys46.

This sequence belongs to the long (4 C-C) scorpion toxin superfamily. Sodium channel inhibitor family. Alpha subfamily. As to expression, expressed by the venom gland.

It is found in the secreted. Its function is as follows. Alpha toxins bind voltage-independently at site-3 of sodium channels (Nav) and inhibit the inactivation of the activated channels, thereby blocking neuronal transmission. By extending the depolarized period it indirectly affects beta-cell voltage-dependent potassium channels, thus increasing potassium permeability. The chain is Alpha-toxin Ts5 from Tityus serrulatus (Brazilian scorpion).